Consider the following 225-residue polypeptide: PKHD-type hydroxylase Smal_0990 (225 aa).

One can recognise a Fe2OG dioxygenase domain in the interval K78–S177. Positions 96, 98, and 158 each coordinate Fe cation. R168 serves as a coordination point for 2-oxoglutarate.

The cofactor is Fe(2+). Requires L-ascorbate as cofactor.

This chain is PKHD-type hydroxylase Smal_0990, found in Stenotrophomonas maltophilia (strain R551-3).